A 627-amino-acid polypeptide reads, in one-letter code: 1,4-alpha-glucan branching enzyme GlgB (627 aa).

The active-site Nucleophile is the D309. Catalysis depends on E352, which acts as the Proton donor.

This sequence belongs to the glycosyl hydrolase 13 family. GlgB subfamily. In terms of assembly, monomer.

It catalyses the reaction Transfers a segment of a (1-&gt;4)-alpha-D-glucan chain to a primary hydroxy group in a similar glucan chain.. The protein operates within glycan biosynthesis; glycogen biosynthesis. In terms of biological role, catalyzes the formation of the alpha-1,6-glucosidic linkages in glycogen by scission of a 1,4-alpha-linked oligosaccharide from growing alpha-1,4-glucan chains and the subsequent attachment of the oligosaccharide to the alpha-1,6 position. In Bacillus subtilis (strain 168), this protein is 1,4-alpha-glucan branching enzyme GlgB (glgB).